We begin with the raw amino-acid sequence, 78 residues long: Beta-defensin 12 (78 aa).

The signal sequence occupies residues Met1–Ala27. 3 cysteine pairs are disulfide-bonded: Cys46–Cys73, Cys53–Cys67, and Cys57–Cys74.

Belongs to the beta-defensin family. In terms of tissue distribution, only expressed in epididymis (caput, corpus and cauda).

It localises to the secreted. Its function is as follows. Has antibacterial activity. This chain is Beta-defensin 12 (Defb12), found in Mus musculus (Mouse).